Consider the following 309-residue polypeptide: Cell division protein FtsQ (309 aa).

The Cytoplasmic segment spans residues Met1–His52. A helical membrane pass occupies residues Thr53–Gly74. Over His75 to Ile309 the chain is Periplasmic. The POTRA domain maps to Phe89 to Arg157.

The protein belongs to the FtsQ/DivIB family. FtsQ subfamily.

The protein resides in the cell inner membrane. Essential cell division protein. This chain is Cell division protein FtsQ, found in Rhizobium meliloti (strain 1021) (Ensifer meliloti).